The sequence spans 84 residues: Defensin-like protein 116 (84 aa).

The signal sequence occupies residues 1 to 24 (MAITKNMLVVLLLTIIFVTSSVHC). Disulfide bonds link C40–C80, C46–C71, C55–C78, and C59–C79.

This sequence belongs to the DEFL family.

Its subcellular location is the secreted. This is Defensin-like protein 116 from Arabidopsis thaliana (Mouse-ear cress).